We begin with the raw amino-acid sequence, 567 residues long: Frizzled-7 (567 aa).

A signal peptide spans 1–31; that stretch reads MRPAAGEAGAGLRWLGLAALLAALLGTPCAA. Residues 32–250 lie on the Extracellular side of the membrane; that stretch reads AHHEDKAISV…EAEVRFARLW (219 aa). The FZ domain occupies 42–161; that stretch reads PDHGFCQPIS…HGAGEICVGQ (120 aa). Disulfide bonds link Cys47-Cys108, Cys55-Cys101, Cys92-Cys129, Cys118-Cys158, and Cys122-Cys146. N-linked (GlcNAc...) asparagine glycosylation occurs at Asn61. Asn162 carries N-linked (GlcNAc...) asparagine glycosylation. Residues 251 to 271 form a helical membrane-spanning segment; the sequence is VGVWSVLCCASTLFTVLTYLV. At 272–282 the chain is on the cytoplasmic side; that stretch reads DMRRFSYPERP. The chain crosses the membrane as a helical span at residues 283–303; it reads IIFLSGCYFMVAVAYAAGFLL. Topologically, residues 304 to 330 are extracellular; it reads EERVVCLERFSEDGYRTVAQGTKKEGC. The chain crosses the membrane as a helical span at residues 331 to 351; the sequence is TILFMILYFFGMASSIWWVIL. Residues 352–373 lie on the Cytoplasmic side of the membrane; that stretch reads SLTWFLAAGMKWGHEAIEANSQ. Residues 374-394 form a helical membrane-spanning segment; it reads YFHLAAWAVPAVKTITILAMG. Residues 395–417 are Extracellular-facing; sequence QVDGDVLSGVCYVGIYSVDSLRG. The helical transmembrane segment at 418–438 threads the bilayer; that stretch reads FVLAPLFVYLFIGTSFLLAGF. Over 439–464 the chain is Cytoplasmic; it reads VSLFRIRTIMKHDGTKTEKLEKLMVR. Residues 465–485 traverse the membrane as a helical segment; sequence IGVFSVLYTVPATIVVACYFY. The Extracellular portion of the chain corresponds to 486 to 521; that stretch reads EQAFRSTWEKTWLLQTCKTYAVPCPSHFAPMSPDFT. The helical transmembrane segment at 522–542 threads the bilayer; the sequence is VFMIKYLMTMIVGITTGFWIW. The Cytoplasmic portion of the chain corresponds to 543 to 567; the sequence is SGKTLQSWRRFYHRLSTGSKGETAV. The Lys-Thr-X-X-X-Trp motif, mediates interaction with the PDZ domain of Dvl family members motif lies at 545–550; that stretch reads KTLQSW. The short motif at 565–567 is the PDZ-binding element; that stretch reads TAV.

It belongs to the G-protein coupled receptor Fz/Smo family. As to expression, expressed broadly in cranial ectoderm. Also expressed in the developing somites and in other cranial placodes, including the olfactory, lens, otic placodes (lateral half of the vesicle) and epibranchial placodes. Low level of expression in all the mesoderm derivatives in the limb buds.

It is found in the cell membrane. The protein resides in the endosome membrane. Functionally, receptor for Wnt proteins. Most of frizzled receptors are coupled to the beta-catenin canonical signaling pathway, which leads to the activation of disheveled proteins, inhibition of GSK-3 kinase, nuclear accumulation of beta-catenin and activation of Wnt target genes. A second signaling pathway involving PKC and calcium fluxes has been seen for some family members, but it is not yet clear if it represents a distinct pathway or if it can be integrated in the canonical pathway, as PKC seems to be required for Wnt-mediated inactivation of GSK-3 kinase. Both pathways seem to involve interactions with G-proteins. May be involved in transduction and intercellular transmission of polarity information during tissue morphogenesis and/or in differentiated tissues. The sequence is that of Frizzled-7 (FZD7) from Gallus gallus (Chicken).